The primary structure comprises 429 residues: MTQYAASAGDAIVDPATHGLDVYAVGGAIRDTLLGLPVQDRDYVVVGATPEAMEARGFRTVGKDFPVFLHPRTQAEYALARTERKTAAGYKGFSVYYAPDVTLEDDLVRRDLTINAMAQRVAEDGALVGPVIDPYGGQADLASRTFRHVSEAFVEDPVRILRVARFAARFAEFHVAPETRALMQRMAEAGEVDALVPERVWQELARGLLEARPSRLFAVLRDCGALVRLLPELDRLWGVPQRADYHPEVDTGVHTMMVVDTAAAMDTPLPVRFAALVHDLGKGTTPADILPRHVGHEARGLPMIEDICRRLRVPTDCRDLAIMVAREHGNIHRSDGFDATALVRLLERCDALRKPERFRQALLACEADARGRLGFEQRDYPQPVRLLRALQAAASIDAGAVAKRYADNPAHIKQAVHVARIEAVAQAGL.

ATP is bound by residues Gly-27 and Arg-30. Residues Gly-27 and Arg-30 each contribute to the CTP site. Mg(2+) is bound by residues Asp-40 and Asp-42. ATP contacts are provided by Arg-110, Arg-162, and Arg-165. CTP is bound by residues Arg-110, Arg-162, and Arg-165. The HD domain maps to 251–352 (TGVHTMMVVD…VRLLERCDAL (102 aa)).

It belongs to the tRNA nucleotidyltransferase/poly(A) polymerase family. Bacterial CCA-adding enzyme type 1 subfamily. As to quaternary structure, monomer. Can also form homodimers and oligomers. Requires Mg(2+) as cofactor. The cofactor is Ni(2+).

The catalysed reaction is a tRNA precursor + 2 CTP + ATP = a tRNA with a 3' CCA end + 3 diphosphate. It catalyses the reaction a tRNA with a 3' CCA end + 2 CTP + ATP = a tRNA with a 3' CCACCA end + 3 diphosphate. Catalyzes the addition and repair of the essential 3'-terminal CCA sequence in tRNAs without using a nucleic acid template. Adds these three nucleotides in the order of C, C, and A to the tRNA nucleotide-73, using CTP and ATP as substrates and producing inorganic pyrophosphate. tRNA 3'-terminal CCA addition is required both for tRNA processing and repair. Also involved in tRNA surveillance by mediating tandem CCA addition to generate a CCACCA at the 3' terminus of unstable tRNAs. While stable tRNAs receive only 3'-terminal CCA, unstable tRNAs are marked with CCACCA and rapidly degraded. In Ralstonia nicotianae (strain ATCC BAA-1114 / GMI1000) (Ralstonia solanacearum), this protein is Multifunctional CCA protein.